Consider the following 508-residue polypeptide: Photosystem II CP47 reaction center protein (508 aa).

The next 6 membrane-spanning stretches (helical) occupy residues 21–36 (SVHI…WAGS), 101–115 (IVFS…IWHW), 140–156 (GIHL…FGAF), 203–218 (IAAG…FHLS), 237–252 (VLSS…AFVV), and 457–472 (SFAL…HGAR).

The protein belongs to the PsbB/PsbC family. PsbB subfamily. As to quaternary structure, PSII is composed of 1 copy each of membrane proteins PsbA, PsbB, PsbC, PsbD, PsbE, PsbF, PsbH, PsbI, PsbJ, PsbK, PsbL, PsbM, PsbT, PsbX, PsbY, PsbZ, Psb30/Ycf12, at least 3 peripheral proteins of the oxygen-evolving complex and a large number of cofactors. It forms dimeric complexes. The cofactor is Binds multiple chlorophylls. PSII binds additional chlorophylls, carotenoids and specific lipids..

It is found in the plastid. The protein localises to the chloroplast thylakoid membrane. One of the components of the core complex of photosystem II (PSII). It binds chlorophyll and helps catalyze the primary light-induced photochemical processes of PSII. PSII is a light-driven water:plastoquinone oxidoreductase, using light energy to abstract electrons from H(2)O, generating O(2) and a proton gradient subsequently used for ATP formation. The sequence is that of Photosystem II CP47 reaction center protein from Nuphar advena (Common spatterdock).